A 133-amino-acid chain; its full sequence is uncharacterized protein (133 aa).

In terms of domain architecture, FAS1 spans 1 to 130 (MPNIVEIAVS…GIIHVIDNVI (130 aa)).

This is an uncharacterized protein from Synechocystis sp. (strain ATCC 27184 / PCC 6803 / Kazusa).